We begin with the raw amino-acid sequence, 631 residues long: Phosphomethylpyrimidine synthase (631 aa).

Residues N239, M268, Y297, H333, 353–355 (SRG), 394–397 (DGLR), and E433 each bind substrate. A Zn(2+)-binding site is contributed by H437. Y460 contributes to the substrate binding site. H501 contacts Zn(2+). [4Fe-4S] cluster is bound by residues C581, C584, and C589.

It belongs to the ThiC family. As to quaternary structure, homodimer. [4Fe-4S] cluster is required as a cofactor.

The catalysed reaction is 5-amino-1-(5-phospho-beta-D-ribosyl)imidazole + S-adenosyl-L-methionine = 4-amino-2-methyl-5-(phosphooxymethyl)pyrimidine + CO + 5'-deoxyadenosine + formate + L-methionine + 3 H(+). It functions in the pathway cofactor biosynthesis; thiamine diphosphate biosynthesis. Catalyzes the synthesis of the hydroxymethylpyrimidine phosphate (HMP-P) moiety of thiamine from aminoimidazole ribotide (AIR) in a radical S-adenosyl-L-methionine (SAM)-dependent reaction. This Citrobacter koseri (strain ATCC BAA-895 / CDC 4225-83 / SGSC4696) protein is Phosphomethylpyrimidine synthase.